Consider the following 201-residue polypeptide: HTH-type transcriptional regulator Hpr (201 aa).

One can recognise an HTH marR-type domain in the interval 13 to 157; the sequence is AMLFSQRIAQ…MMCIIRNIYG (145 aa). The segment at residues 63–86 is a DNA-binding region (H-T-H motif); it reads ISEIAKFGVMHVSTAFNFSKKLEE.

In terms of assembly, homodimer.

Negative regulator of protease production and sporulation. This Geobacillus sp. (strain WCH70) protein is HTH-type transcriptional regulator Hpr.